We begin with the raw amino-acid sequence, 398 residues long: Argininosuccinate synthase (398 aa).

9-17 provides a ligand contact to ATP; it reads AYSGGLDTS. Positions 87 and 92 each coordinate L-citrulline. G117 contributes to the ATP binding site. 3 residues coordinate L-aspartate: T119, N123, and D124. Residue N123 participates in L-citrulline binding. L-citrulline contacts are provided by R127, S176, S185, E261, and Y273.

The protein belongs to the argininosuccinate synthase family. Type 1 subfamily. As to quaternary structure, homotetramer.

It localises to the cytoplasm. It carries out the reaction L-citrulline + L-aspartate + ATP = 2-(N(omega)-L-arginino)succinate + AMP + diphosphate + H(+). The protein operates within amino-acid biosynthesis; L-arginine biosynthesis; L-arginine from L-ornithine and carbamoyl phosphate: step 2/3. This chain is Argininosuccinate synthase, found in Clostridium tetani (strain Massachusetts / E88).